The following is a 596-amino-acid chain: Phosphoprotein (596 aa).

Composition is skewed to polar residues over residues 1-11 (MENNAKDNQIM), 38-66 (TDSQENTADSNEVNTGNKRLSTTIYQLES), and 74-85 (ENSGSVNENRQL). Disordered regions lie at residues 1–25 (MENNAKDNQIMDSWEEGSGDKSSDI), 38–196 (TDSQ…ESIS), and 220–352 (KNTR…EEST). An N0 binding region spans residues 33–41 (EFILSTDSQ). Over residues 88–97 (SHERATETKN) the composition is skewed to basic and acidic residues. Polar residues predominate over residues 127-144 (ISRSSPDPNNGTQIQESI). Composition is skewed to basic and acidic residues over residues 151-168 (EMDKDSAKREMRQSKDVP) and 233-249 (EDDKGIKKGVGKPEDTN). Over residues 270–324 (TLKISTTTGESTRPQSGSQGKRITSWNILNSESGSRTESTSQNSQIPTSGKSNTV) the composition is skewed to polar residues. Residues 331–352 (LESRIKTQKTDGKEREDTEEST) are compositionally biased toward basic and acidic residues. A multimerization region spans residues 374–441 (LDLYQDKRVV…KMDESHRRLI (68 aa)). Residues 416-436 (LNQIQNEILSLKTDLKKMDES) adopt a coiled-coil conformation. The l protein binding stretch occupies residues 442–475 (ENQKEQLSLITSLISNLKIMTERGGKKDQPENSG).

It belongs to the respirovirus P protein family. Homotetramer. Interacts (via multimerization domain) with polymerase L; this interaction forms the polymerase complex. Interacts (via N-terminus) with N0; this interaction allows P to chaperon N0 before encapsidation and form the N-P complex. Interacts (via C-terminus) with N-RNA template; this interaction positions the polymerase on the template.

In terms of biological role, essential cofactor of the RNA polymerase L that plays a central role in the transcription and replication by forming the polymerase complex with RNA polymerase L and recruiting L to the genomic N-RNA template for RNA synthesis. Also plays a central role in the encapsidation of nascent RNA chains by forming the encapsidation complex with the nucleocapsid protein N (N-P complex). Acts as a chaperone for newly synthesized free N protein, so-called N0, allowing encapsidation of nascent RNA chains during replication. The nucleoprotein protein N prevents excessive phosphorylation of P, which leads to down-regulation of viral transcription/ replication. Participates, together with N, in the formation of viral factories (viroplasms), which are large inclusions in the host cytoplasm where replication takes place. Recruits host PI4KB and remodel the host endoplasmic reticulum membrane to form viral replication factories. The sequence is that of Phosphoprotein (P/V/D) from Bovine parainfluenza 3 virus (BPIV-3).